The primary structure comprises 280 residues: Transmembrane protein 45B (280 aa).

7 helical membrane passes run 7-27, 49-69, 96-116, 120-140, 150-170, 184-204, and 216-236; these read HALPGSFFLVFGLWWSVKYPL, LIEGILKAAFALIGILAEQFV, MYLFYGISGVVDILTFLPLNL, LDRLSLGIAVIIEGLLFYYHV, IHSLLLIAVFGGAISIMIEVF, LTILQGTWFWQIGFVLYPLGG, and VMFITMCFCWHYAVALLIMAI.

It belongs to the TMEM45 family.

It is found in the membrane. The protein is Transmembrane protein 45B (tmem45b) of Xenopus tropicalis (Western clawed frog).